A 167-amino-acid polypeptide reads, in one-letter code: Mediator of RNA polymerase II transcription subunit 10 (167 aa).

A disordered region spans residues 53–88; the sequence is LSTHTKPQPPSQDEEQKEKQDDTPEGSANDPLLRDI.

It belongs to the Mediator complex subunit 10 family. In terms of assembly, component of the Mediator complex.

It localises to the nucleus. Its function is as follows. Component of the Mediator complex, a coactivator involved in the regulated transcription of nearly all RNA polymerase II-dependent genes. Mediator functions as a bridge to convey information from gene-specific regulatory proteins to the basal RNA polymerase II transcription machinery. Mediator is recruited to promoters by direct interactions with regulatory proteins and serves as a scaffold for the assembly of a functional preinitiation complex with RNA polymerase II and the general transcription factors. This chain is Mediator of RNA polymerase II transcription subunit 10 (nut2), found in Neosartorya fischeri (strain ATCC 1020 / DSM 3700 / CBS 544.65 / FGSC A1164 / JCM 1740 / NRRL 181 / WB 181) (Aspergillus fischerianus).